Consider the following 483-residue polypeptide: MKLGEFADILPLSGSIAGETTISGLASDSRRVNAGDLFFALQGSKADGAAYAADAAGRGAVAIIARPGTVGDVGVPVIEADDPRHVLALASARLYGAQPATMVAVTGTSGKTSVAAFTRQIWEKAGLAAASIGTTGVVAPGRDEYGELTTPDPVSLHKLLRELADAGVTHASMEASSHGLDQRRLDGVKLAAGGFTNLGRDHMDYHPTVEHYHQSKMRLFKTLLPKGAPAVIFADDPWSEPTEKVALAAGLQLLTVGRRGTFLTIKRVEHERHRQRTEIEHEGMIYDIMLPLAGDFQVGNALVAAGLAISTGLPADKAVAALEHLKGASGRLELTGTTEDGAQIYVDYAHKPDALENVLQAVRPFTTGRVIVVFGCGGDRDPGKRPIMGEIARRLADVVIVTDDNPRSEVPAEIRRAILEAVPEATEIGDRREAIRTAVAMLNSGDTLIVAGKGHEIGQEIAGTKLPFSDHEEVRRALKERTA.

Ser-29 serves as a coordination point for UDP-N-acetyl-alpha-D-muramoyl-L-alanyl-D-glutamate. 107–113 is an ATP binding site; it reads GTSGKTS. UDP-N-acetyl-alpha-D-muramoyl-L-alanyl-D-glutamate-binding positions include 149–150, Ser-176, Gln-182, and Arg-184; that span reads TT. An N6-carboxylysine modification is found at Lys-216. Meso-2,6-diaminopimelate-binding positions include Arg-380, 404 to 407, Gly-452, and Glu-456; that span reads DNPR. The Meso-diaminopimelate recognition motif signature appears at 404 to 407; that stretch reads DNPR.

This sequence belongs to the MurCDEF family. MurE subfamily. Mg(2+) is required as a cofactor. In terms of processing, carboxylation is probably crucial for Mg(2+) binding and, consequently, for the gamma-phosphate positioning of ATP.

Its subcellular location is the cytoplasm. The catalysed reaction is UDP-N-acetyl-alpha-D-muramoyl-L-alanyl-D-glutamate + meso-2,6-diaminopimelate + ATP = UDP-N-acetyl-alpha-D-muramoyl-L-alanyl-gamma-D-glutamyl-meso-2,6-diaminopimelate + ADP + phosphate + H(+). It functions in the pathway cell wall biogenesis; peptidoglycan biosynthesis. In terms of biological role, catalyzes the addition of meso-diaminopimelic acid to the nucleotide precursor UDP-N-acetylmuramoyl-L-alanyl-D-glutamate (UMAG) in the biosynthesis of bacterial cell-wall peptidoglycan. This is UDP-N-acetylmuramoyl-L-alanyl-D-glutamate--2,6-diaminopimelate ligase from Chelativorans sp. (strain BNC1).